Here is a 563-residue protein sequence, read N- to C-terminus: MEELKPRFANSCPLTPLGFLERAATVYGDCISVVYDDLSYTWSQTHTRCLRVASCIESCLGVKKGQVVSVVAPNVPAMYELNFAVPMAGVVLNNINTRLNAVTISVMLRHSESKLVFVDQLSVRLVLDAVSLFPKNTPTPLLVLIADNITGENLTVEDREHFVCCYEDLVEKGDDKTFKWVRPISEWDPIVLNYTSGTTSSPKGVVHSHRSVFVVTLDSLIDWGVPKQPVYLWTLPMFHANGWGYTWGIAAVGGTNICLRRFDGEIIFNLIRRHRVTHMCAAPIVLNMLSNSPNAEPLPNPVHVMTGGAPPPAAVLLRTESLGFVISHGYGMTEMLGVVVSCAWKREWNRLPATEQARLKSRQGVRTAAMMEVDVVDPNSGVSVKRDGLTMGEIVLKGSSIMLGYLKNSAATAKCIRADGWFYTGDMAVMHPDGYLEIKDRSKDVIISGGENVSSVEVESALYSHPAVDEAAVVACPDEYWGETPFAFVTLKKGMRVRPTEKEILEYCREKLAHFMVPKVVVFRDKLPKTSTGKIQKFTLKEIVKTMGYSSSSSSYGVGRARM.

Residues 195–203 (TSGTTSSPK), 328–333 (HGYGMT), Asp-426, 438–441 (IKDR), and Lys-534 contribute to the ATP site. The segment at 263–328 (DGEIIFNLIR…TESLGFVISH (66 aa)) is SBD1. Residues 329 to 405 (GYGMTEMLGV…LKGSSIMLGY (77 aa)) form an SBD2 region.

Belongs to the ATP-dependent AMP-binding enzyme family.

It is found in the cytoplasm. Its subcellular location is the cytosol. In Humulus lupulus (European hop), this protein is Probable CoA ligase CCL11.